The following is a 164-amino-acid chain: Interferon gamma (164 aa).

Residues Met1–Gly19 form the signal peptide. N-linked (GlcNAc...) asparagine glycans are attached at residues Asn42, Asn61, and Asn95.

This sequence belongs to the type II (or gamma) interferon family. As to quaternary structure, homodimer.

It is found in the secreted. Its function is as follows. Produced by lymphocytes activated by specific antigens or mitogens. IFN-gamma, in addition to having antiviral activity, has important immunoregulatory functions. It is a potent activator of macrophages, it has antiproliferative effects on transformed cells and it can potentiate the antiviral and antitumor effects of the type I interferons. This Anas platyrhynchos (Mallard) protein is Interferon gamma (IFNG).